We begin with the raw amino-acid sequence, 241 residues long: 1-Cys peroxiredoxin (241 aa).

One can recognise a Thioredoxin domain in the interval 33–189; sequence LRIGDVVPDF…IIRILDSFQL (157 aa). Cys75 (cysteine sulfenic acid (-SOH) intermediate) is an active-site residue.

Belongs to the peroxiredoxin family. Prx6 subfamily. In terms of assembly, homodimer.

The catalysed reaction is a hydroperoxide + [thioredoxin]-dithiol = an alcohol + [thioredoxin]-disulfide + H2O. Functionally, thiol-specific peroxidase that catalyzes the reduction of hydrogen peroxide and organic hydroperoxides to water and alcohols, respectively. Plays a role in cell protection against oxidative stress by detoxifying peroxides. This Dictyostelium discoideum (Social amoeba) protein is 1-Cys peroxiredoxin.